We begin with the raw amino-acid sequence, 512 residues long: 2,3-bisphosphoglycerate-independent phosphoglycerate mutase (512 aa).

Mn(2+) is bound by residues Asp12 and Ser62. The active-site Phosphoserine intermediate is Ser62. Residues His123, Arg153–Asp154, Arg185, Arg191, Arg260–Arg263, and Lys333 each bind substrate. Residues Asp400, His404, Asp441, His442, and His460 each coordinate Mn(2+).

The protein belongs to the BPG-independent phosphoglycerate mutase family. As to quaternary structure, monomer. Mn(2+) is required as a cofactor.

The enzyme catalyses (2R)-2-phosphoglycerate = (2R)-3-phosphoglycerate. It functions in the pathway carbohydrate degradation; glycolysis; pyruvate from D-glyceraldehyde 3-phosphate: step 3/5. Its function is as follows. Catalyzes the interconversion of 2-phosphoglycerate and 3-phosphoglycerate. This chain is 2,3-bisphosphoglycerate-independent phosphoglycerate mutase, found in Clostridium perfringens (strain 13 / Type A).